The primary structure comprises 185 residues: Threonylcarbamoyl-AMP synthase (185 aa).

The 182-residue stretch at 4-185 (SFRVQQAARE…LATGEVVRPG (182 aa)) folds into the YrdC-like domain.

Belongs to the SUA5 family. TsaC subfamily.

Its subcellular location is the cytoplasm. It catalyses the reaction L-threonine + hydrogencarbonate + ATP = L-threonylcarbamoyladenylate + diphosphate + H2O. In terms of biological role, required for the formation of a threonylcarbamoyl group on adenosine at position 37 (t(6)A37) in tRNAs that read codons beginning with adenine. Catalyzes the conversion of L-threonine, HCO(3)(-)/CO(2) and ATP to give threonylcarbamoyl-AMP (TC-AMP) as the acyladenylate intermediate, with the release of diphosphate. The polypeptide is Threonylcarbamoyl-AMP synthase (Pseudomonas putida (strain GB-1)).